Here is a 388-residue protein sequence, read N- to C-terminus: FBD-associated F-box protein At5g60610 (388 aa).

Residues 1-47 (MDRISGLPDELLVKIISFVPTKVAVSTSILSKRWESLWKWVPKLECD) form the F-box domain. The region spanning 337 to 388 (NWKNIQRSVPKCLKSSLKTLEFAGYTARPEERDFLSFIFKKARCLKTSSISH) is the FBD domain.

The protein is FBD-associated F-box protein At5g60610 of Arabidopsis thaliana (Mouse-ear cress).